Here is a 238-residue protein sequence, read N- to C-terminus: Ribosomal RNA small subunit methyltransferase G (238 aa).

S-adenosyl-L-methionine is bound by residues G80, 131-132 (AE), and R148.

The protein belongs to the methyltransferase superfamily. RNA methyltransferase RsmG family.

It localises to the cytoplasm. Specifically methylates the N7 position of a guanine in 16S rRNA. The sequence is that of Ribosomal RNA small subunit methyltransferase G from Thermotoga maritima (strain ATCC 43589 / DSM 3109 / JCM 10099 / NBRC 100826 / MSB8).